The primary structure comprises 533 residues: Thromboxane-A synthase (533 aa).

The Cytoplasmic portion of the chain corresponds to 1 to 10 (MEALGFLKLE). A helical membrane pass occupies residues 11 to 31 (VNGPMVTVALSVALLALLKWY). The Lumenal segment spans residues 32 to 75 (STSAFSRLEKLGLRHPKPSPFIGNLMFFRQGFWESQMELRKLYG). A helical transmembrane segment spans residues 76–96 (PLCGYYLGRRMFIVISEPDMI). The Cytoplasmic segment spans residues 97 to 223 (KQVLVENFSN…KRFFEFCIPR (127 aa)). Residues 224–244 (PILVLLLSFPSIMVPLARILP) traverse the membrane as a helical segment. The Lumenal portion of the chain corresponds to 245–335 (NKNRDELNGF…LTVDEIVGQA (91 aa)). The chain crosses the membrane as a helical span at residues 336 to 356 (FIFLIAGYEIVTNTLSFATYL). Residues 357–533 (LATNPDCQEK…NGVYIKIVSR (177 aa)) lie on the Cytoplasmic side of the membrane. Cys-479 contributes to the heme binding site.

It belongs to the cytochrome P450 family. As to quaternary structure, monomer. It depends on heme as a cofactor.

The protein localises to the endoplasmic reticulum membrane. The enzyme catalyses prostaglandin H2 = thromboxane A2. It carries out the reaction prostaglandin H2 = (12S)-hydroxy-(5Z,8E,10E)-heptadecatrienoate + malonaldehyde. It catalyses the reaction a hydroperoxyeicosatetraenoate = an oxoeicosatetraenoate + H2O. The catalysed reaction is (15S)-hydroperoxy-(5Z,8Z,11Z,13E)-eicosatetraenoate = 15-oxo-(5Z,8Z,11Z,13E)-eicosatetraenoate + H2O. The enzyme catalyses (15S)-hydroperoxy-(5Z,8Z,11Z,13E)-eicosatetraenoate + AH2 = (15S)-hydroxy-(5Z,8Z,11Z,13E)-eicosatetraenoate + A + H2O. In terms of biological role, catalyzes the conversion of prostaglandin H2 (PGH2) to thromboxane A2 (TXA2), a potent inducer of blood vessel constriction and platelet aggregation. Also cleaves PGH2 to 12-hydroxy-heptadecatrienoicacid (12-HHT) and malondialdehyde, which is known to act as a mediator of DNA damage. 12-HHT and malondialdehyde are formed stoichiometrically in the same amounts as TXA2. Additionally, displays dehydratase activity, toward (15S)-hydroperoxy-(5Z,8Z,11Z,13E)-eicosatetraenoate (15(S)-HPETE) producing 15-KETE and 15-HETE. This Macaca fascicularis (Crab-eating macaque) protein is Thromboxane-A synthase (TBXAS1).